Consider the following 410-residue polypeptide: Arginine biosynthesis bifunctional protein ArgJ (410 aa).

Positions 158, 184, 195, 282, 405, and 410 each coordinate substrate. Threonine 195 acts as the Nucleophile in catalysis.

It belongs to the ArgJ family. Heterotetramer of two alpha and two beta chains.

The protein resides in the cytoplasm. The catalysed reaction is N(2)-acetyl-L-ornithine + L-glutamate = N-acetyl-L-glutamate + L-ornithine. It catalyses the reaction L-glutamate + acetyl-CoA = N-acetyl-L-glutamate + CoA + H(+). Its pathway is amino-acid biosynthesis; L-arginine biosynthesis; L-ornithine and N-acetyl-L-glutamate from L-glutamate and N(2)-acetyl-L-ornithine (cyclic): step 1/1. It participates in amino-acid biosynthesis; L-arginine biosynthesis; N(2)-acetyl-L-ornithine from L-glutamate: step 1/4. Catalyzes two activities which are involved in the cyclic version of arginine biosynthesis: the synthesis of N-acetylglutamate from glutamate and acetyl-CoA as the acetyl donor, and of ornithine by transacetylation between N(2)-acetylornithine and glutamate. This chain is Arginine biosynthesis bifunctional protein ArgJ, found in Rhodopirellula baltica (strain DSM 10527 / NCIMB 13988 / SH1).